The following is a 424-amino-acid chain: Glutamyl-tRNA reductase (424 aa).

Residues 49 to 52 (TCNR), Ser-109, 114 to 116 (EDQ), and Gln-120 each bind substrate. The active-site Nucleophile is Cys-50. 189 to 194 (GFGKMS) is a binding site for NADP(+).

Belongs to the glutamyl-tRNA reductase family. As to quaternary structure, homodimer.

The catalysed reaction is (S)-4-amino-5-oxopentanoate + tRNA(Glu) + NADP(+) = L-glutamyl-tRNA(Glu) + NADPH + H(+). Its pathway is porphyrin-containing compound metabolism; protoporphyrin-IX biosynthesis; 5-aminolevulinate from L-glutamyl-tRNA(Glu): step 1/2. Functionally, catalyzes the NADPH-dependent reduction of glutamyl-tRNA(Glu) to glutamate 1-semialdehyde (GSA). This chain is Glutamyl-tRNA reductase, found in Alkaliphilus metalliredigens (strain QYMF).